A 405-amino-acid chain; its full sequence is Aminodeoxyfutalosine deaminase (405 aa).

A divalent metal cation-binding residues include His61 and His63. Substrate contacts are provided by Glu141, Ser145, and His179. A divalent metal cation is bound at residue His206. The active-site Proton donor is the Glu209. Residue Asp306 coordinates a divalent metal cation.

Belongs to the metallo-dependent hydrolases superfamily. A divalent metal cation serves as cofactor.

The enzyme catalyses 6-amino-6-deoxyfutalosine + H2O + H(+) = futalosine + NH4(+). Its pathway is quinol/quinone metabolism; menaquinone biosynthesis. In terms of biological role, catalyzes the deamination of aminodeoxyfutalosine (AFL) into futalosine (FL), a step in the biosynthesis of menaquinone (MK, vitamin K2). To a lesser extent, can also deaminate 5'-methylthioadenosine. In Nitratiruptor sp. (strain SB155-2), this protein is Aminodeoxyfutalosine deaminase.